We begin with the raw amino-acid sequence, 447 residues long: Methyl-coenzyme M reductase II subunit beta (447 aa).

Y368 serves as a coordination point for coenzyme M. G370 serves as a coordination point for coenzyme B.

This sequence belongs to the methyl-coenzyme M reductase beta subunit family. As to quaternary structure, MCR is a hexamer of two alpha, two beta, and two gamma chains, forming a dimer of heterotrimers. Coenzyme F430 is required as a cofactor.

It catalyses the reaction coenzyme B + methyl-coenzyme M = methane + coenzyme M-coenzyme B heterodisulfide. The protein operates within one-carbon metabolism; methyl-coenzyme M reduction; methane from methyl-coenzyme M: step 1/1. In terms of biological role, component of the methyl-coenzyme M reductase (MCR) I that catalyzes the reductive cleavage of methyl-coenzyme M (CoM-S-CH3 or 2-(methylthio)ethanesulfonate) using coenzyme B (CoB or 7-mercaptoheptanoylthreonine phosphate) as reductant which results in the production of methane and the mixed heterodisulfide of CoB and CoM (CoM-S-S-CoB). This is the final step in methanogenesis. In Methanocaldococcus jannaschii (strain ATCC 43067 / DSM 2661 / JAL-1 / JCM 10045 / NBRC 100440) (Methanococcus jannaschii), this protein is Methyl-coenzyme M reductase II subunit beta (mrtB).